Reading from the N-terminus, the 604-residue chain is Sulfite reductase [NADPH] flavoprotein alpha-component (604 aa).

The 139-residue stretch at 68–206 (LSIIFASQTG…PAAEWRKQAL (139 aa)) folds into the Flavodoxin-like domain. FMN-binding positions include 74-79 (SQTGNA), 121-124 (STNG), and 157-166 (LGDSSYEFFC). The 215-residue stretch at 239–453 (QNPYTATLLT…VEHNNNFKLP (215 aa)) folds into the FAD-binding FR-type domain. FAD-binding positions include threonine 327, glycine 361, 391 to 394 (RLYS), 409 to 411 (TVG), tyrosine 415, and 424 to 427 (GGAS). NADP(+) is bound by residues 524-525 (SR), 530-534 (KVYVQ), and aspartate 566. Residue tyrosine 604 coordinates FAD.

The protein belongs to the NADPH-dependent sulphite reductase flavoprotein subunit CysJ family. In the N-terminal section; belongs to the flavodoxin family. This sequence in the C-terminal section; belongs to the flavoprotein pyridine nucleotide cytochrome reductase family. As to quaternary structure, alpha(8)-beta(8). The alpha component is a flavoprotein, the beta component is a hemoprotein. FAD is required as a cofactor. The cofactor is FMN.

The catalysed reaction is hydrogen sulfide + 3 NADP(+) + 3 H2O = sulfite + 3 NADPH + 4 H(+). Its pathway is sulfur metabolism; hydrogen sulfide biosynthesis; hydrogen sulfide from sulfite (NADPH route): step 1/1. In terms of biological role, component of the sulfite reductase complex that catalyzes the 6-electron reduction of sulfite to sulfide. This is one of several activities required for the biosynthesis of L-cysteine from sulfate. The flavoprotein component catalyzes the electron flow from NADPH -&gt; FAD -&gt; FMN to the hemoprotein component. The sequence is that of Sulfite reductase [NADPH] flavoprotein alpha-component from Aliivibrio fischeri (strain ATCC 700601 / ES114) (Vibrio fischeri).